The following is a 640-amino-acid chain: PAN2-PAN3 deadenylation complex subunit PAN3 (640 aa).

The C3H1-type zinc finger occupies 17–46 (ENKDILCRNVLIYGHCRYEDQGCTYNHDQN). Polar residues-rich tracts occupy residues 43–53 (HDQNKNSSQPE) and 63–87 (DSPSFTPSGQSTVLPKKTTLSSQAA). The disordered stretch occupies residues 43 to 101 (HDQNKNSSQPEAPSKKMFNVDSPSFTPSGQSTVLPKKTTLSSQAASAAPFTPRGGGTPT). The interval 237–498 (QVIPNSGLPQ…TIEHFMTGIA (262 aa)) is pseudokinase domain. Residues N263, R288, 338-345 (DFHPLSKT), and 397-398 (SK) contribute to the ATP site. Residues 499 to 537 (SQMTTFFDLALQDNDEKLFHLAREVENGRIARSLMKLLT) adopt a coiled-coil conformation. Residues 538–640 (ILERGDYDGV…SKTGAPGANT (103 aa)) are knob domain.

It belongs to the protein kinase superfamily. PAN3 family. Homodimer. Forms a heterotrimer with a catalytic subunit PAN2 to form the poly(A)-nuclease (PAN) deadenylation complex. Interacts (via PAM-2 motif) with poly(A)-binding protein PAB1 (via PABC domain), conferring substrate specificity of the enzyme complex.

Its subcellular location is the cytoplasm. Regulatory subunit of the poly(A)-nuclease (PAN) deadenylation complex, one of two cytoplasmic mRNA deadenylases involved in mRNA turnover. PAN specifically shortens poly(A) tails of RNA and the activity is stimulated by poly(A)-binding protein PAB1. PAN deadenylation is followed by rapid degradation of the shortened mRNA tails by the CCR4-NOT complex. Deadenylated mRNAs are then degraded by two alternative mechanisms, namely exosome-mediated 3'-5' exonucleolytic degradation, or deadenylation-dependent mRNA decaping and subsequent 5'-3' exonucleolytic degradation by XRN1. May also be involved in post-transcriptional maturation of mRNA poly(A) tails. PAN3 acts as a positive regulator for PAN activity, recruiting the catalytic subunit PAN2 to mRNA via its interaction with RNA and with PAB1. The polypeptide is PAN2-PAN3 deadenylation complex subunit PAN3 (Chaetomium thermophilum (strain DSM 1495 / CBS 144.50 / IMI 039719) (Thermochaetoides thermophila)).